The primary structure comprises 294 residues: Histone deacetylase HDT3 (294 aa).

Residue Met1 is modified to N-acetylmethionine. Residues 2–5 (EFWG) are required to repress transcription. The tract at residues 124–269 (QVNFQLPNED…TPKSAGAFGC (146 aa)) is disordered. The segment covering 140–188 (DDADGSEEDSSDDDDSENSGDEEEEKVTAESDSEEDDSSDDEEDDSSEE) has biased composition (acidic residues). The span at 189–202 (ETPKKPEEPKKRSA) shows a compositional bias: basic and acidic residues. Residues 203 to 213 (EPNSSKNPASN) are compositionally biased toward low complexity. The span at 252 to 262 (GETSKQQQTPK) shows a compositional bias: polar residues. The C2H2-type zinc finger occupies 267–290 (FGCKSCTRTFTSEMGLQSHTKAKH).

The protein belongs to the histone deacetylase HD2 family. In terms of assembly, interacts with DNMT2. Expressed in leaves, roots, stems, young plantlets, flowers and siliques. Highest levels in ovules, embryos, shoot apical meristems and first leaves. Also expressed in somatic embryos.

The protein localises to the nucleus. Its subcellular location is the nucleolus. Functionally, probably mediates the deacetylation of lysine residues on the N-terminal part of the core histones (H2A, H2B, H3 and H4). Histone deacetylation gives a tag for epigenetic repression and plays an important role in transcriptional regulation, cell cycle progression and developmental events. Involved in the modulation of abscisic acid and stress-responsive genes. This is Histone deacetylase HDT3 (HDT3) from Arabidopsis thaliana (Mouse-ear cress).